A 433-amino-acid chain; its full sequence is Serine hydroxymethyltransferase (433 aa).

Residues Leu-133 and 137-139 each bind (6S)-5,6,7,8-tetrahydrofolate; that span reads GHL. Lys-242 is subject to N6-(pyridoxal phosphate)lysine. Residue 366–368 coordinates (6S)-5,6,7,8-tetrahydrofolate; sequence SPF.

This sequence belongs to the SHMT family. In terms of assembly, homodimer. Pyridoxal 5'-phosphate is required as a cofactor.

It is found in the cytoplasm. It carries out the reaction (6R)-5,10-methylene-5,6,7,8-tetrahydrofolate + glycine + H2O = (6S)-5,6,7,8-tetrahydrofolate + L-serine. It participates in one-carbon metabolism; tetrahydrofolate interconversion. The protein operates within amino-acid biosynthesis; glycine biosynthesis; glycine from L-serine: step 1/1. In terms of biological role, catalyzes the reversible interconversion of serine and glycine with tetrahydrofolate (THF) serving as the one-carbon carrier. This reaction serves as the major source of one-carbon groups required for the biosynthesis of purines, thymidylate, methionine, and other important biomolecules. Also exhibits THF-independent aldolase activity toward beta-hydroxyamino acids, producing glycine and aldehydes, via a retro-aldol mechanism. In Beijerinckia indica subsp. indica (strain ATCC 9039 / DSM 1715 / NCIMB 8712), this protein is Serine hydroxymethyltransferase.